Reading from the N-terminus, the 651-residue chain is Acetyl-coenzyme A synthetase (651 aa).

Residues 189–192 (RGGK), threonine 311, and asparagine 335 each bind CoA. ATP is bound by residues 387–389 (GEP), 411–416 (DTWWQT), aspartate 500, and arginine 515. Serine 523 is a CoA binding site. Position 526 (arginine 526) interacts with ATP. Positions 537, 539, and 542 each coordinate Mg(2+). CoA is bound at residue arginine 586. Lysine 611 is modified (N6-acetyllysine).

This sequence belongs to the ATP-dependent AMP-binding enzyme family. The cofactor is Mg(2+). In terms of processing, acetylated. Deacetylation by the SIR2-homolog deacetylase activates the enzyme.

It carries out the reaction acetate + ATP + CoA = acetyl-CoA + AMP + diphosphate. Its function is as follows. Catalyzes the conversion of acetate into acetyl-CoA (AcCoA), an essential intermediate at the junction of anabolic and catabolic pathways. AcsA undergoes a two-step reaction. In the first half reaction, AcsA combines acetate with ATP to form acetyl-adenylate (AcAMP) intermediate. In the second half reaction, it can then transfer the acetyl group from AcAMP to the sulfhydryl group of CoA, forming the product AcCoA. The chain is Acetyl-coenzyme A synthetase from Brucella abortus (strain S19).